Here is a 557-residue protein sequence, read N- to C-terminus: MEYLLQRITGEIAGSLRRAAVKAGYLDAEDELAFELEKPKEKAHGDLATNLAMLLTKKARKNPREIAATLLEYLEIPAVVERVEIAGPGFINFYFKKDWVVAVIPEILSFGEKYGRLAIGAGKRVQVEFVSANPTGLLHMGNGRGAALGDILANILTEAGYEVSREYYINDAGNQIENFNKSVEARYLELLGYKVEFPEEGYHGEDIIDTARNIVARFGDRFIHLPEKERQEALGKIALEEKLQSIKKSLENFGVKYDVWFSERSLHESGEVEKTVKLLLERGYLYEKDGALWFAASKLGEEKDEVLVRKNGVPTYYAADIAYHKNKFDRGFDLVINIWGADHHGHVSRMKTALKALGYDPERLIVILMQLVRLFQGGELVRMSKRTGQYITLDELVEEVGVDAARYFFVMRSHDAHLDFDLDLAKEKSNENPVYYIQYAHARIMSLYRQCNEQGVTLPPVEDVDLAILSSEAELNLLRHLAEFPVEIEKCATALAPHHLARYLHELAGYFHTFYNSCRVLGVEENLSKARLLLVEATRIVLRKGLKMLGVSAPEKM.

The 'HIGH' region signature appears at 132-142; sequence ANPTGLLHMGN.

Belongs to the class-I aminoacyl-tRNA synthetase family. Monomer.

It localises to the cytoplasm. It catalyses the reaction tRNA(Arg) + L-arginine + ATP = L-arginyl-tRNA(Arg) + AMP + diphosphate. This chain is Arginine--tRNA ligase, found in Carboxydothermus hydrogenoformans (strain ATCC BAA-161 / DSM 6008 / Z-2901).